Here is a 121-residue protein sequence, read N- to C-terminus: Flagellar hook-basal body complex protein FliE (121 aa).

This sequence belongs to the FliE family.

It is found in the bacterial flagellum basal body. The chain is Flagellar hook-basal body complex protein FliE from Treponema denticola (strain ATCC 35405 / DSM 14222 / CIP 103919 / JCM 8153 / KCTC 15104).